A 139-amino-acid chain; its full sequence is Protocatechuate 4,5-dioxygenase alpha chain (139 aa).

Composed of two subunits (alpha and beta) in a 1:1 ratio. Fe(2+) is required as a cofactor.

The catalysed reaction is 3,4-dihydroxybenzoate + O2 = 4-carboxy-2-hydroxy-cis,cis-muconate 6-semialdehyde + H(+). Functionally, responsible for the aromatic ring fission of protocatechuate. The sequence is that of Protocatechuate 4,5-dioxygenase alpha chain (ligA) from Sphingobium sp. (strain NBRC 103272 / SYK-6).